The chain runs to 56 residues: Large ribosomal subunit protein bL33 (56 aa).

The protein belongs to the bacterial ribosomal protein bL33 family.

The protein is Large ribosomal subunit protein bL33 of Ehrlichia ruminantium (strain Gardel).